Consider the following 553-residue polypeptide: Glucagon-like peptide 2 receptor (553 aa).

Over 1–173 the chain is Extracellular; it reads MKLGSSRAGP…SFKQNVDRYA (173 aa). Cystine bridges form between Cys-83–Cys-105, Cys-96–Cys-137, and Cys-118–Cys-159. Asn-97, Asn-113, Asn-148, and Asn-162 each carry an N-linked (GlcNAc...) asparagine glycan. The chain crosses the membrane as a helical span at residues 174 to 198; the sequence is LLSTLQLMYTVGYSFSLISLFLALT. Residues 199–210 are Cytoplasmic-facing; that stretch reads LLLFLRKLHCTR. A helical transmembrane segment spans residues 211–235; sequence NYIHMNLFASFILRTLAVLVKDVVF. The Extracellular portion of the chain corresponds to 236-261; that stretch reads YNSYSKRPDNENGWMSYLSEMSTSCR. A helical membrane pass occupies residues 262–285; sequence SVQVLLHYFVGANYLWLLVEGLYL. Residues 286–299 lie on the Cytoplasmic side of the membrane; sequence HTLLEPTVLPERRL. The helical transmembrane segment at 300 to 321 threads the bilayer; it reads WPRYLLLGWAFPVLFVVPWGFA. Over 322–339 the chain is Extracellular; that stretch reads RAHLENTGCWTTNGNKKI. The helical transmembrane segment at 340–362 threads the bilayer; that stretch reads WWIIRGPMMLCVTVNFFIFLKIL. Over 363-386 the chain is Cytoplasmic; that stretch reads KLLISKLKAHQMCFRDYKYRLAKS. A helical membrane pass occupies residues 387 to 405; sequence TLVLIPLLGVHEILFSFIT. The Extracellular segment spans residues 406 to 417; sequence DDQVEGFAKLIR. The helical transmembrane segment at 418-438 threads the bilayer; sequence LFIQLTLSSFHGFLVALQYGF. The Cytoplasmic portion of the chain corresponds to 439 to 550; sequence ANGEVKAELR…ANTMEEILEE (112 aa).

Belongs to the G-protein coupled receptor 2 family.

The protein localises to the cell membrane. Functionally, this is a receptor for glucagon-like peptide 2. The activity of this receptor is mediated by G proteins which activate adenylyl cyclase. This Homo sapiens (Human) protein is Glucagon-like peptide 2 receptor (GLP2R).